We begin with the raw amino-acid sequence, 59 residues long: Large ribosomal subunit protein bL32 (59 aa).

Positions 1–16 (MAVPKRKTSPSKRGMR) are enriched in basic residues. The interval 1–59 (MAVPKRKTSPSKRGMRRSADALKAPTYVEDKNSGELRRPHHIDLKSGMYRGRQVLEAKE) is disordered. Positions 28 to 44 (VEDKNSGELRRPHHIDL) are enriched in basic and acidic residues.

This sequence belongs to the bacterial ribosomal protein bL32 family.

This chain is Large ribosomal subunit protein bL32, found in Brucella anthropi (strain ATCC 49188 / DSM 6882 / CCUG 24695 / JCM 21032 / LMG 3331 / NBRC 15819 / NCTC 12168 / Alc 37) (Ochrobactrum anthropi).